The following is a 484-amino-acid chain: Synaptic vesicle membrane protein VAT-1 homolog (484 aa).

2 stretches are compositionally biased toward low complexity: residues 1–13 (MSGE…QQNA) and 40–61 (SAST…PAAE). Disordered stretches follow at residues 1 to 65 (MSGE…KAPE) and 402 to 484 (IGKI…KEEN). Residues 411–484 (PMKEEEKKEE…KKEEVKKEEN (74 aa)) are compositionally biased toward basic and acidic residues.

It belongs to the zinc-containing alcohol dehydrogenase family. Quinone oxidoreductase subfamily.

The sequence is that of Synaptic vesicle membrane protein VAT-1 homolog from Danio rerio (Zebrafish).